Reading from the N-terminus, the 440-residue chain is UDP-glycosyltransferase 87A1 (440 aa).

Residues Ser263, 312–314 (CDQ), 329–337 (HCGYNSTLE), and 351–354 (FWDQ) each bind UDP-alpha-D-glucose.

The protein belongs to the UDP-glycosyltransferase family.

The sequence is that of UDP-glycosyltransferase 87A1 (UGT87A1) from Arabidopsis thaliana (Mouse-ear cress).